The sequence spans 1104 residues: General transcription factor II-I repeat domain-containing protein 1 (1104 aa).

Glycyl lysine isopeptide (Lys-Gly) (interchain with G-Cter in SUMO2) cross-links involve residues Lys27, Lys184, Lys212, Lys225, Lys238, Lys271, Lys337, Lys436, Lys439, and Lys443. The stretch at 119–213 (LEQCSDVYLL…PDDGGQDTKA (95 aa)) is one GTF2I-like 1 repeat. One copy of the GTF2I-like 2 repeat lies at 342–436 (IKEMEDINTL…FDERIFTGNK (95 aa)). A Phosphoserine modification is found at Ser448. Residues 509–559 (SDPSPTSEEMTDSLPGHLPSEDSGYGMEMPADKGPSEEPWSEERPAEESPG) are disordered. Over residues 538–555 (PADKGPSEEPWSEERPAE) the composition is skewed to basic and acidic residues. The stretch at 556 to 650 (ESPGDVIRPL…ELLTDGVKEP (95 aa)) is one GTF2I-like 3 repeat. Residues Lys567, Lys579, Lys588, Lys622, Lys638, Lys669, Lys709, Lys717, Lys757, Lys759, and Lys772 each participate in a glycyl lysine isopeptide (Lys-Gly) (interchain with G-Cter in SUMO2) cross-link. A GTF2I-like 4 repeat occupies 681-775 (LSRIDIANTL…FQGLIPKPET (95 aa)). The tract at residues 783-802 (EAGKTTRPRRLQQDTWQPDE) is disordered. Residues 805–899 (ANRLGEKVIL…LQPFAEVCND (95 aa)) form a GTF2I-like 5 repeat. Glycyl lysine isopeptide (Lys-Gly) (interchain with G-Cter in SUMO2) cross-links involve residues Lys841 and Lys901. The GTF2I-like 6 repeat unit spans residues 908–1002 (SNKLGKKVIL…LQPFGDVCNN (95 aa)). 2 disordered regions span residues 1001–1044 (NNAK…VAST) and 1058–1104 (LHPN…LPTR). A Nuclear localization signal motif is present at residues 1012–1019 (PKRKRKRV). Residues 1021 to 1043 (EGNSVSSSSSSSSSSSNPESVAS) are compositionally biased toward low complexity.

Belongs to the TFII-I family. As to quaternary structure, interacts with the retinoblastoma protein (RB1) via its C-terminus. Widely expressed.

It is found in the nucleus. Functionally, may be a transcription regulator involved in cell-cycle progression and skeletal muscle differentiation. May repress GTF2I transcriptional functions, by preventing its nuclear residency, or by inhibiting its transcriptional activation. May contribute to slow-twitch fiber type specificity during myogenesis and in regenerating muscles. Binds troponin I slow-muscle fiber enhancer (USE B1). Binds specifically and with high affinity to the EFG sequences derived from the early enhancer of HOXC8. This Mus musculus (Mouse) protein is General transcription factor II-I repeat domain-containing protein 1 (Gtf2ird1).